The sequence spans 155 residues: Interleukin-2 (155 aa).

The first 20 residues, 1–20 (MYKMQLLSCIALMLVLVANS), serve as a signal peptide directing secretion. T24 carries an O-linked (GalNAc...) threonine glycan. An intrachain disulfide couples C79 to C127. An N-linked (GlcNAc...) asparagine glycan is attached at N112.

It belongs to the IL-2 family.

It localises to the secreted. Its function is as follows. Cytokine produced by activated CD4-positive helper T-cells and to a lesser extend activated CD8-positive T-cells and natural killer (NK) cells that plays pivotal roles in the immune response and tolerance. Binds to a receptor complex composed of either the high-affinity trimeric IL-2R (IL2RA/CD25, IL2RB/CD122 and IL2RG/CD132) or the low-affinity dimeric IL-2R (IL2RB and IL2RG). Interaction with the receptor leads to oligomerization and conformation changes in the IL-2R subunits resulting in downstream signaling starting with phosphorylation of JAK1 and JAK3. In turn, JAK1 and JAK3 phosphorylate the receptor to form a docking site leading to the phosphorylation of several substrates including STAT5. This process leads to activation of several pathways including STAT, phosphoinositide-3-kinase/PI3K and mitogen-activated protein kinase/MAPK pathways. Functions as a T-cell growth factor and can increase NK-cell cytolytic activity as well. Promotes strong proliferation of activated B-cells and subsequently immunoglobulin production. Plays a pivotal role in regulating the adaptive immune system by controlling the survival and proliferation of regulatory T-cells, which are required for the maintenance of immune tolerance. Moreover, participates in the differentiation and homeostasis of effector T-cell subsets, including Th1, Th2, Th17 as well as memory CD8-positive T-cells. The sequence is that of Interleukin-2 (IL2) from Vulpes vulpes (Red fox).